The primary structure comprises 427 residues: Protein king tubby 1 (427 aa).

Residues serine 48–aspartate 174 are disordered. A compositionally biased stretch (low complexity) spans serine 57–proline 86.

The protein belongs to the TUB family.

The protein resides in the cytoplasm. It localises to the nucleus. The chain is Protein king tubby 1 (king-tubby1) from Culex quinquefasciatus (Southern house mosquito).